Here is a 361-residue protein sequence, read N- to C-terminus: Beta-hexosaminidase (361 aa).

Substrate contacts are provided by residues Asp-69, Arg-77, Arg-144, and 174-175; that span reads KH. Catalysis depends on His-187, which acts as the Proton donor/acceptor. Residue Asp-258 is the Nucleophile of the active site.

It belongs to the glycosyl hydrolase 3 family. NagZ subfamily.

The protein resides in the cytoplasm. It carries out the reaction Hydrolysis of terminal non-reducing N-acetyl-D-hexosamine residues in N-acetyl-beta-D-hexosaminides.. It functions in the pathway cell wall biogenesis; peptidoglycan recycling. In terms of biological role, plays a role in peptidoglycan recycling by cleaving the terminal beta-1,4-linked N-acetylglucosamine (GlcNAc) from peptide-linked peptidoglycan fragments, giving rise to free GlcNAc, anhydro-N-acetylmuramic acid and anhydro-N-acetylmuramic acid-linked peptides. The polypeptide is Beta-hexosaminidase (Neisseria meningitidis serogroup C (strain 053442)).